Consider the following 509-residue polypeptide: MCEEYTKEKIMEIRKKHIGPSCKVFFANDPIKIVHAKGQYMFDEKGERYLDCINNVAHVGHSHPEVTKAALKQMELLNTNSRFLHDNLVRYAECLISTLPEKLSVCYFVNSGSEANDLALRLARQYTGHQDVITLDHAYHGHVTSLIDISPYKFHQLGKDAQKEYIHVAPSPDTYRGKYREDHPDPASAYAKDVEDIIQKAHQNKRQIAAFIAESMQSCGGQIIPPAGYFQKVSEFVHKAGGVFIADEVQVGFGRVGKHFWSFQLQGEDFLPDIVTMGKPIGNGHPMSCVVTTKEIAEAFGATGMEYFNTFGGNPVSCAIGLAVLDIIEKEDLRGNATTVGNYLTELLNEQKQKHPLIGDIRGVGLFVGVDLVKDRLFRTPATAEAQHIIYKLKEKRILLSADGPYRNVLKFKPPMCFNKEDAKLVVDEIDQCLTALEKAIGIQSNAGLHEKTSAKRKVHNENSGDTNAKEKETCSSNSQERNPNDHAYRQSNGLHPESPTFTRKRIRT.

K279 is modified (N6-(pyridoxal phosphate)lysine). Residues 451–474 (EKTSAKRKVHNENSGDTNAKEKET) show a composition bias toward basic and acidic residues. A disordered region spans residues 451–509 (EKTSAKRKVHNENSGDTNAKEKETCSSNSQERNPNDHAYRQSNGLHPESPTFTRKRIRT).

Belongs to the class-III pyridoxal-phosphate-dependent aminotransferase family. As to quaternary structure, homotetramer. The cofactor is pyridoxal 5'-phosphate.

Its subcellular location is the mitochondrion. The enzyme catalyses phosphoethanolamine + H2O = acetaldehyde + NH4(+) + phosphate. Its function is as follows. Catalyzes the pyridoxal-phosphate-dependent breakdown of phosphoethanolamine, converting it to ammonia, inorganic phosphate and acetaldehyde. The polypeptide is Ethanolamine-phosphate phospho-lyase (etnppl) (Xenopus laevis (African clawed frog)).